Reading from the N-terminus, the 95-residue chain is Nucleoid-associated protein MMOB0740 (95 aa).

The protein belongs to the YbaB/EbfC family. In terms of assembly, homodimer.

It localises to the cytoplasm. It is found in the nucleoid. Binds to DNA and alters its conformation. May be involved in regulation of gene expression, nucleoid organization and DNA protection. In Mycoplasma mobile (strain ATCC 43663 / 163K / NCTC 11711) (Mesomycoplasma mobile), this protein is Nucleoid-associated protein MMOB0740.